We begin with the raw amino-acid sequence, 207 residues long: Large ribosomal subunit protein bL25 (207 aa).

The interval Glu-171–Lys-207 is disordered. A compositionally biased stretch (low complexity) spans Glu-184–Lys-207.

Belongs to the bacterial ribosomal protein bL25 family. CTC subfamily. As to quaternary structure, part of the 50S ribosomal subunit; part of the 5S rRNA/L5/L18/L25 subcomplex. Contacts the 5S rRNA. Binds to the 5S rRNA independently of L5 and L18.

This is one of the proteins that binds to the 5S RNA in the ribosome where it forms part of the central protuberance. The sequence is that of Large ribosomal subunit protein bL25 from Bifidobacterium longum subsp. infantis (strain ATCC 15697 / DSM 20088 / JCM 1222 / NCTC 11817 / S12).